The chain runs to 507 residues: Cytochrome c-type protein ImcH (507 aa).

Helical transmembrane passes span 14–34 (ISLI…AFIA), 45–65 (YIGL…LILV), and 100–120 (LFIF…VASI). 15 residues coordinate heme: Cys-132, Cys-136, Met-140, His-152, Cys-157, Cys-160, His-161, Asp-400, Cys-449, Cys-452, His-453, Cys-487, Cys-490, His-491, and Glu-496.

Belongs to the NapC/NirT/NrfH family. Binds 4 heme c groups covalently per subunit.

Its subcellular location is the cell inner membrane. Redox protein involved in a high-potential metal respiratory pathway. Is required only for electron transfer to terminal extracellular electron acceptors with redox potentials higher than -0.1 V. ImcH likely transfers electrons from the quinone pool to a periplasmic acceptor. The protein is Cytochrome c-type protein ImcH of Geobacter sulfurreducens (strain ATCC 51573 / DSM 12127 / PCA).